A 406-amino-acid chain; its full sequence is Cysteine desulfurase (406 aa).

Lysine 226 carries the post-translational modification N6-(pyridoxal phosphate)lysine. Residue cysteine 364 is the Cysteine persulfide intermediate of the active site.

The protein belongs to the class-V pyridoxal-phosphate-dependent aminotransferase family. Csd subfamily. Homodimer. Interacts with SufE and the SufBCD complex composed of SufB, SufC and SufD. The interaction with SufE is required to mediate the direct transfer of the sulfur atom from the S-sulfanylcysteine. Pyridoxal 5'-phosphate serves as cofactor.

The protein localises to the cytoplasm. The catalysed reaction is (sulfur carrier)-H + L-cysteine = (sulfur carrier)-SH + L-alanine. It catalyses the reaction L-selenocysteine + AH2 = hydrogenselenide + L-alanine + A + H(+). It functions in the pathway cofactor biosynthesis; iron-sulfur cluster biosynthesis. Cysteine desulfurases mobilize the sulfur from L-cysteine to yield L-alanine, an essential step in sulfur metabolism for biosynthesis of a variety of sulfur-containing biomolecules. Component of the suf operon, which is activated and required under specific conditions such as oxidative stress and iron limitation. Acts as a potent selenocysteine lyase in vitro, that mobilizes selenium from L-selenocysteine. Selenocysteine lyase activity is however unsure in vivo. In Salmonella heidelberg (strain SL476), this protein is Cysteine desulfurase.